Here is a 391-residue protein sequence, read N- to C-terminus: D-gluconate/D-galactonate dehydratase (391 aa).

Glutamate 198 contributes to the Mg(2+) binding site. The Proton donor role is filled by histidine 200. Residues glutamate 224 and glutamate 250 each contribute to the Mg(2+) site. Residue histidine 300 is the Proton acceptor of the active site.

This sequence belongs to the mandelate racemase/muconate lactonizing enzyme family. GaD subfamily. In terms of assembly, homooctamer. Mg(2+) is required as a cofactor.

It carries out the reaction D-gluconate = 2-dehydro-3-deoxy-D-gluconate + H2O. The catalysed reaction is D-galactonate = 2-dehydro-3-deoxy-D-galactonate + H2O. It functions in the pathway carbohydrate acid metabolism; D-gluconate degradation. Involved in the degradation of glucose and galactose via the nonphosphorylative variant of Entner-Doudoroff pathway. Catalyzes the dehydration of gluconate to produce 2-keto-3-deoxygluconate (KDG). It is also able to catalyze the dehydration of galactonate to produce 2-keto-3-deoxygalactonate (KDGal). This chain is D-gluconate/D-galactonate dehydratase, found in Picrophilus torridus (strain ATCC 700027 / DSM 9790 / JCM 10055 / NBRC 100828 / KAW 2/3).